Consider the following 323-residue polypeptide: Beta-ketoacyl-[acyl-carrier-protein] synthase III (323 aa).

Catalysis depends on residues C112 and H249. The segment at 250–254 (QANYR) is ACP-binding. N279 is a catalytic residue.

This sequence belongs to the thiolase-like superfamily. FabH family. In terms of assembly, homodimer.

The protein localises to the cytoplasm. The enzyme catalyses malonyl-[ACP] + acetyl-CoA + H(+) = 3-oxobutanoyl-[ACP] + CO2 + CoA. It functions in the pathway lipid metabolism; fatty acid biosynthesis. Its function is as follows. Catalyzes the condensation reaction of fatty acid synthesis by the addition to an acyl acceptor of two carbons from malonyl-ACP. Catalyzes the first condensation reaction which initiates fatty acid synthesis and may therefore play a role in governing the total rate of fatty acid production. Possesses both acetoacetyl-ACP synthase and acetyl transacylase activities. Its substrate specificity determines the biosynthesis of branched-chain and/or straight-chain of fatty acids. This Clostridium kluyveri (strain NBRC 12016) protein is Beta-ketoacyl-[acyl-carrier-protein] synthase III.